A 467-amino-acid chain; its full sequence is H(+)/Cl(-) exchange transporter ClcA (467 aa).

Over 1–30 (MTKRERIIQSVLVKVPKDAINQFLSHGSTP) the chain is Cytoplasmic. The chain crosses the membrane as a helical span at residues 31–67 (ISVLFLAALVGVLAGLVGTYFEIAVHFVSETRTEWLK). Over 68–74 (SEIGHLL) the chain is Periplasmic. A helical membrane pass occupies residues 75 to 98 (PLWLAAILISAALAFVGYFLVHRF). A Selectivity filter part_1 motif is present at residues 104 to 108 (GSGIP). S105 provides a ligand contact to chloride. Residues 107 to 114 (IPEIEGAM) constitute an intramembrane region (helical). Residues 115–121 (DNIRPVR) are Cytoplasmic-facing. 2 helical membrane passes run 122–139 (WWRV…ALGS) and 146–164 (EGPT…TDIF). The Selectivity filter part_2 signature appears at 144–148 (GREGP). The Cytoplasmic portion of the chain corresponds to 165-174 (RVKDDDTRHS). 2 intramembrane regions (helical) span residues 175–187 (LLAS…LAAA) and 191–199 (PLAGIMFVV). Residues 200–212 (EEMRPQFRYSLIS) lie on the Cytoplasmic side of the membrane. Residues 213 to 230 (IRAVIISAVMANIVFRAI) form a helical membrane-spanning segment. Topologically, residues 231-250 (NGQDAVITMPQYQPPELKAL) are periplasmic. A helical membrane pass occupies residues 251–279 (WLFLLLGGLFGVFGVLFNKLVTVAQDAFV). The Cytoplasmic portion of the chain corresponds to 280–285 (ALHKND). Residues 286–307 (RKRYLITGTCLGGIFGLLLLYV) form a helical membrane-spanning segment. Residues 308-327 (PELTGGGIHLIPDVTNGNYS) lie on the Periplasmic side of the membrane. The next 2 membrane-spanning stretches (helical) occupy residues 328–347 (VSLL…ICFG) and 353–374 (GIFA…ATAK). The Selectivity filter part_3 motif lies at 353–357 (GIFAP). 2 residues coordinate chloride: I354 and F355. At 375 to 384 (ILLPDLPIEP) the chain is on the periplasmic side. An intramembrane region (helical) is located at residues 385–399 (GMFAIAGMGALFAAT). The segment at residues 400 to 402 (VRA) is an intramembrane region (note=Loop between two helices). The helical intramembrane region spans 403-414 (PITGILLVIEMT). An intramembrane region (note=Loop between two helices) is located at residues 415–419 (NNYYL). Residues 420–436 (ILPLIITSLGAVICAQI) traverse the membrane as a helical segment. Residues 437–467 (CGGKPIYSQLLHRTIKNDKLRQQDLPEQQNS) lie on the Cytoplasmic side of the membrane. A chloride-binding site is contributed by Y443.

Belongs to the chloride channel (TC 2.A.49) family. ClcA subfamily. As to quaternary structure, homodimer.

The protein localises to the cell inner membrane. The catalysed reaction is 2 chloride(in) + H(+)(out) = 2 chloride(out) + H(+)(in). Its function is as follows. Proton-coupled chloride transporter. Functions as antiport system and exchanges two chloride ions for 1 proton. Probably acts as an electrical shunt for an outwardly-directed proton pump that is linked to amino acid decarboxylation, as part of the extreme acid resistance (XAR) response. In Vibrio vulnificus (strain CMCP6), this protein is H(+)/Cl(-) exchange transporter ClcA.